The sequence spans 359 residues: 3-dehydroquinate synthase (359 aa).

Residues 70-75, 104-108, 128-129, Lys141, and Lys150 each bind NAD(+); these read DAEGGK, GAATD, and TT. Zn(2+) is bound by residues Glu183, His246, and His262.

The protein belongs to the sugar phosphate cyclases superfamily. Dehydroquinate synthase family. Co(2+) serves as cofactor. It depends on Zn(2+) as a cofactor. Requires NAD(+) as cofactor.

It localises to the cytoplasm. It catalyses the reaction 7-phospho-2-dehydro-3-deoxy-D-arabino-heptonate = 3-dehydroquinate + phosphate. It participates in metabolic intermediate biosynthesis; chorismate biosynthesis; chorismate from D-erythrose 4-phosphate and phosphoenolpyruvate: step 2/7. Catalyzes the conversion of 3-deoxy-D-arabino-heptulosonate 7-phosphate (DAHP) to dehydroquinate (DHQ). In Mycolicibacterium vanbaalenii (strain DSM 7251 / JCM 13017 / BCRC 16820 / KCTC 9966 / NRRL B-24157 / PYR-1) (Mycobacterium vanbaalenii), this protein is 3-dehydroquinate synthase.